A 465-amino-acid chain; its full sequence is Iron-sulfur cluster assembly SufBD family protein SE_0610 (465 aa).

It belongs to the iron-sulfur cluster assembly SufBD family.

In Staphylococcus epidermidis (strain ATCC 12228 / FDA PCI 1200), this protein is Iron-sulfur cluster assembly SufBD family protein SE_0610.